The primary structure comprises 352 residues: Holliday junction branch migration complex subunit RuvB (352 aa).

The tract at residues 5-191 (TDDFSEQRII…FGIVARLEFY (187 aa)) is large ATPase domain (RuvB-L). ATP is bound by residues Leu30, Arg31, Gly72, Lys75, Thr76, Thr77, 138–140 (EDY), Arg181, Tyr191, and Arg228. Thr76 provides a ligand contact to Mg(2+). A small ATPAse domain (RuvB-S) region spans residues 192–262 (TPLELTKIVT…MADAALVMLD (71 aa)). Residues 265-352 (PVGFDLMDRK…GPNGDLWAGQ (88 aa)) are head domain (RuvB-H). DNA contacts are provided by Arg301, Arg320, and Arg325.

It belongs to the RuvB family. In terms of assembly, homohexamer. Forms an RuvA(8)-RuvB(12)-Holliday junction (HJ) complex. HJ DNA is sandwiched between 2 RuvA tetramers; dsDNA enters through RuvA and exits via RuvB. An RuvB hexamer assembles on each DNA strand where it exits the tetramer. Each RuvB hexamer is contacted by two RuvA subunits (via domain III) on 2 adjacent RuvB subunits; this complex drives branch migration. In the full resolvosome a probable DNA-RuvA(4)-RuvB(12)-RuvC(2) complex forms which resolves the HJ.

It is found in the cytoplasm. The catalysed reaction is ATP + H2O = ADP + phosphate + H(+). Functionally, the RuvA-RuvB-RuvC complex processes Holliday junction (HJ) DNA during genetic recombination and DNA repair, while the RuvA-RuvB complex plays an important role in the rescue of blocked DNA replication forks via replication fork reversal (RFR). RuvA specifically binds to HJ cruciform DNA, conferring on it an open structure. The RuvB hexamer acts as an ATP-dependent pump, pulling dsDNA into and through the RuvAB complex. RuvB forms 2 homohexamers on either side of HJ DNA bound by 1 or 2 RuvA tetramers; 4 subunits per hexamer contact DNA at a time. Coordinated motions by a converter formed by DNA-disengaged RuvB subunits stimulates ATP hydrolysis and nucleotide exchange. Immobilization of the converter enables RuvB to convert the ATP-contained energy into a lever motion, pulling 2 nucleotides of DNA out of the RuvA tetramer per ATP hydrolyzed, thus driving DNA branch migration. The RuvB motors rotate together with the DNA substrate, which together with the progressing nucleotide cycle form the mechanistic basis for DNA recombination by continuous HJ branch migration. Branch migration allows RuvC to scan DNA until it finds its consensus sequence, where it cleaves and resolves cruciform DNA. This Janthinobacterium sp. (strain Marseille) (Minibacterium massiliensis) protein is Holliday junction branch migration complex subunit RuvB.